The sequence spans 297 residues: Adrenocorticotropic hormone receptor (297 aa).

Over 1–23 (MKHIIHASGNVNGTARNNSDCPH) the chain is Extracellular. N-linked (GlcNAc...) asparagine glycosylation is found at N12 and N17. Intrachain disulfides connect C21–C253 and C245–C251. Residues 24-49 (VALPEEIFFIISITGVLENLIIILAV) traverse the membrane as a helical segment. The Cytoplasmic portion of the chain corresponds to 50 to 58 (IKNKNLQFP). A helical membrane pass occupies residues 59 to 79 (MYFFICSLAISDMLGSLYKIL). Topologically, residues 80–104 (ESILIMFRNMGYFKPHGSFETTTDD) are extracellular. The chain crosses the membrane as a helical span at residues 105–126 (IIDTMFILSLLGSIFSLLAIAV). The Cytoplasmic portion of the chain corresponds to 127–147 (DRYITIFHALQYHSIVTMHRT). A helical transmembrane segment spans residues 148–168 (IAVLSIIWTFCIGSGITMVLF). The Extracellular portion of the chain corresponds to 169 to 180 (SHHVPTVLTFTS). The chain crosses the membrane as a helical span at residues 181 to 199 (LFPLMLVFILCLYVHMFLM). The Cytoplasmic portion of the chain corresponds to 200-217 (ARSHARNISTLPRGNMRG). The chain crosses the membrane as a helical span at residues 218 to 244 (AITLTILLGVFIFCWAPFILHILLVTF). Residues 245-256 (CPNNPYCTCYIS) lie on the Extracellular side of the membrane. The chain crosses the membrane as a helical span at residues 257-278 (LFHVNGMLIMCNAVIDPFIYAF). Over 279–297 (RSPELRSAFRRMISYSKCL) the chain is Cytoplasmic. C296 is lipidated: S-palmitoyl cysteine.

This sequence belongs to the G-protein coupled receptor 1 family. Homodimer. Interacts with corticotropin (ACTH). Interacts with MRAP; this interaction targets MC2R to the plasma membrane. Interacts with MRAP2; competing with MRAP for binding to MC2R and impairing the binding of corticotropin (ACTH). In terms of processing, ubiquitinated by MGRN1 that may be involved in post-endocytic trafficking and/or degradation of internalized receptor.

Its subcellular location is the cell membrane. Functionally, hormone receptor primarily expressed in adrenal cortex that plays a key role in regulating adrenocortical function. Upon corticotropin (ACTH) binding, facilitates the release of adrenal glucocorticoids, including cortisol and corticosterone. In addition, MC2R is required for fetal and neonatal adrenal gland development. Mechanistically, activates adenylate cyclase (cAMP), the MAPK cascade as well as the cAMP-dependent protein kinase A pathway leading to steroidogenic factor 1/NR5A1-mediated transcriptional activation. The chain is Adrenocorticotropic hormone receptor (MC2R) from Cavia porcellus (Guinea pig).